The primary structure comprises 322 residues: Phospholipase A1 (322 aa).

The N-terminal stretch at Met-1–Gly-18 is a signal peptide. Cys-23 and Cys-106 form a disulfide bridge. Ser-156 functions as the Nucleophile in the catalytic mechanism. Residue Asp-184 is the Charge relay system of the active site. Cystine bridges form between Cys-195–Cys-200 and Cys-238–Cys-246. The active-site Charge relay system is His-248. Intrachain disulfides connect Cys-263-Cys-290, Cys-264-Cys-315, and Cys-283-Cys-288.

The protein belongs to the AB hydrolase superfamily. Lipase family. Contains six disulfide bonds. Post-translationally, is not glycosylated. In terms of tissue distribution, expressed by the venom gland.

The protein resides in the secreted. It carries out the reaction a 1,2-diacyl-sn-glycero-3-phosphocholine + H2O = a 2-acyl-sn-glycero-3-phosphocholine + a fatty acid + H(+). Functionally, catalyzes the hydrolysis of phosphatidylcholine with phospholipase A1 activity. Shows hemolytic activity. Acts as an allergen. This chain is Phospholipase A1, found in Polybia paulista (Neotropical social wasp).